A 64-amino-acid polypeptide reads, in one-letter code: Small ribosomal subunit protein eS17 (64 aa).

Belongs to the eukaryotic ribosomal protein eS17 family.

This Methanosarcina barkeri (strain Fusaro / DSM 804) protein is Small ribosomal subunit protein eS17.